The following is a 98-amino-acid chain: NADH-ubiquinone oxidoreductase chain 4L (98 aa).

The next 3 helical transmembrane spans lie at 1-21, 26-46, and 61-81; these read MPSISTNIILAFTTALLGVLI, LMSSLLCLEGMMLSMFILVSL, and IILLVFAACEAAVGLALLVMV.

This sequence belongs to the complex I subunit 4L family. As to quaternary structure, core subunit of respiratory chain NADH dehydrogenase (Complex I) which is composed of 45 different subunits.

Its subcellular location is the mitochondrion inner membrane. The enzyme catalyses a ubiquinone + NADH + 5 H(+)(in) = a ubiquinol + NAD(+) + 4 H(+)(out). Core subunit of the mitochondrial membrane respiratory chain NADH dehydrogenase (Complex I) which catalyzes electron transfer from NADH through the respiratory chain, using ubiquinone as an electron acceptor. Part of the enzyme membrane arm which is embedded in the lipid bilayer and involved in proton translocation. This Galago senegalensis (Northern lesser bushbaby) protein is NADH-ubiquinone oxidoreductase chain 4L (MT-ND4L).